A 352-amino-acid polypeptide reads, in one-letter code: Phosphate acyltransferase (352 aa).

The segment covering 328–339 (ESFPGDAREREG) has biased composition (basic and acidic residues). Residues 328 to 352 (ESFPGDAREREGAQAPDAGTERVAS) form a disordered region.

This sequence belongs to the PlsX family. As to quaternary structure, homodimer. Probably interacts with PlsY.

It localises to the cytoplasm. The catalysed reaction is a fatty acyl-[ACP] + phosphate = an acyl phosphate + holo-[ACP]. The protein operates within lipid metabolism; phospholipid metabolism. Catalyzes the reversible formation of acyl-phosphate (acyl-PO(4)) from acyl-[acyl-carrier-protein] (acyl-ACP). This enzyme utilizes acyl-ACP as fatty acyl donor, but not acyl-CoA. This is Phosphate acyltransferase from Geobacter sp. (strain M21).